Reading from the N-terminus, the 459-residue chain is Ribulose bisphosphate carboxylase large chain (459 aa).

An N6,N6,N6-trimethyllysine modification is found at Lys4. Substrate-binding residues include Asn113 and Thr163. Lys165 (proton acceptor) is an active-site residue. Lys167 serves as a coordination point for substrate. Mg(2+)-binding residues include Lys191, Asp193, and Glu194. At Lys191 the chain carries N6-carboxylysine. Catalysis depends on His284, which acts as the Proton acceptor. Substrate-binding residues include Arg285, His317, and Ser369.

The protein belongs to the RuBisCO large chain family. Type I subfamily. Heterohexadecamer of 8 large chains and 8 small chains; disulfide-linked. The disulfide link is formed within the large subunit homodimers. Requires Mg(2+) as cofactor. Post-translationally, the disulfide bond which can form in the large chain dimeric partners within the hexadecamer appears to be associated with oxidative stress and protein turnover.

It localises to the plastid. The protein resides in the chloroplast. The enzyme catalyses 2 (2R)-3-phosphoglycerate + 2 H(+) = D-ribulose 1,5-bisphosphate + CO2 + H2O. It catalyses the reaction D-ribulose 1,5-bisphosphate + O2 = 2-phosphoglycolate + (2R)-3-phosphoglycerate + 2 H(+). RuBisCO catalyzes two reactions: the carboxylation of D-ribulose 1,5-bisphosphate, the primary event in carbon dioxide fixation, as well as the oxidative fragmentation of the pentose substrate in the photorespiration process. Both reactions occur simultaneously and in competition at the same active site. In Micranthes integrifolia (Wholeleaf saxifrage), this protein is Ribulose bisphosphate carboxylase large chain.